The primary structure comprises 232 residues: 7-cyano-7-deazaguanine synthase (232 aa).

An ATP-binding site is contributed by 7-17; it reads CSGGLDSVSLA. Cys-185, Cys-193, Cys-196, and Cys-199 together coordinate Zn(2+).

Belongs to the QueC family. Zn(2+) is required as a cofactor.

The catalysed reaction is 7-carboxy-7-deazaguanine + NH4(+) + ATP = 7-cyano-7-deazaguanine + ADP + phosphate + H2O + H(+). It functions in the pathway purine metabolism; 7-cyano-7-deazaguanine biosynthesis. Functionally, catalyzes the ATP-dependent conversion of 7-carboxy-7-deazaguanine (CDG) to 7-cyano-7-deazaguanine (preQ(0)). The chain is 7-cyano-7-deazaguanine synthase from Chelativorans sp. (strain BNC1).